Consider the following 438-residue polypeptide: GTPase Obg (438 aa).

The Obg domain occupies 1-159 (MAFRDVLNIE…RRVRLELRLI (159 aa)). The OBG-type G domain occupies 160-332 (ADVGLVGYPN…LRETLFQLLP (173 aa)). Residues 166-173 (GYPNAGKS), 191-195 (FTTLS), 219-222 (DIPG), 285-288 (NKVE), and 313-315 (SAK) each bind ATP. Residues Ser-173 and Thr-193 each coordinate Mg(2+). Residues 357 to 435 (IVFREDAPAK…IGTFRFEYFD (79 aa)) enclose the OCT domain.

The protein belongs to the TRAFAC class OBG-HflX-like GTPase superfamily. OBG GTPase family. Monomer. The cofactor is Mg(2+).

The protein resides in the cytoplasm. Functionally, an essential GTPase which binds GTP, GDP and possibly (p)ppGpp with moderate affinity, with high nucleotide exchange rates and a fairly low GTP hydrolysis rate. Plays a role in control of the cell cycle, stress response, ribosome biogenesis and in those bacteria that undergo differentiation, in morphogenesis control. The protein is GTPase Obg of Deinococcus radiodurans (strain ATCC 13939 / DSM 20539 / JCM 16871 / CCUG 27074 / LMG 4051 / NBRC 15346 / NCIMB 9279 / VKM B-1422 / R1).